Consider the following 501-residue polypeptide: Glucans biosynthesis protein G (501 aa).

An N-terminal signal peptide occupies residues 1–24 (MNRRQVLAALAAIPLLPEAFPANA).

It belongs to the OpgD/OpgG family.

The protein localises to the periplasm. Its pathway is glycan metabolism; osmoregulated periplasmic glucan (OPG) biosynthesis. Involved in the biosynthesis of osmoregulated periplasmic glucans (OPGs). The protein is Glucans biosynthesis protein G of Rhodopseudomonas palustris (strain BisA53).